A 364-amino-acid chain; its full sequence is tRNA 2-selenouridine synthase (364 aa).

One can recognise a Rhodanese domain in the interval 14–137 (LIADTPIIDV…LRQTTIQATI (124 aa)). C97 acts as the S-selanylcysteine intermediate in catalysis.

It belongs to the SelU family. Monomer.

It carries out the reaction 5-methylaminomethyl-2-thiouridine(34) in tRNA + selenophosphate + (2E)-geranyl diphosphate + H2O + H(+) = 5-methylaminomethyl-2-selenouridine(34) in tRNA + (2E)-thiogeraniol + phosphate + diphosphate. The enzyme catalyses 5-methylaminomethyl-2-thiouridine(34) in tRNA + (2E)-geranyl diphosphate = 5-methylaminomethyl-S-(2E)-geranyl-thiouridine(34) in tRNA + diphosphate. The catalysed reaction is 5-methylaminomethyl-S-(2E)-geranyl-thiouridine(34) in tRNA + selenophosphate + H(+) = 5-methylaminomethyl-2-(Se-phospho)selenouridine(34) in tRNA + (2E)-thiogeraniol. It catalyses the reaction 5-methylaminomethyl-2-(Se-phospho)selenouridine(34) in tRNA + H2O = 5-methylaminomethyl-2-selenouridine(34) in tRNA + phosphate. In terms of biological role, involved in the post-transcriptional modification of the uridine at the wobble position (U34) of tRNA(Lys), tRNA(Glu) and tRNA(Gln). Catalyzes the conversion of 2-thiouridine (S2U-RNA) to 2-selenouridine (Se2U-RNA). Acts in a two-step process involving geranylation of 2-thiouridine (S2U) to S-geranyl-2-thiouridine (geS2U) and subsequent selenation of the latter derivative to 2-selenouridine (Se2U) in the tRNA chain. The protein is tRNA 2-selenouridine synthase of Escherichia coli O8 (strain IAI1).